The chain runs to 137 residues: Acidic phospholipase A2 1 (137 aa).

Positions Leu-1–Ala-11 are cleaved as a signal peptide. A propeptide spanning residues Ala-12–Leu-19 is cleaved from the precursor. 7 disulfide bridges follow: Cys-30–Cys-89, Cys-44–Cys-136, Cys-46–Cys-62, Cys-61–Cys-117, Cys-68–Cys-110, Cys-78–Cys-103, and Cys-96–Cys-108. 3 residues coordinate Ca(2+): Tyr-45, Gly-47, and Gly-49. Gly-49 and His-65 together coordinate tridecanoate. His-65 is an active-site residue. Residue Asp-66 participates in Ca(2+) binding. Residue Asp-111 is part of the active site.

As to quaternary structure, monomer. Ca(2+) serves as cofactor. Expressed by the venom gland.

The protein localises to the secreted. It catalyses the reaction a 1,2-diacyl-sn-glycero-3-phosphocholine + H2O = a 1-acyl-sn-glycero-3-phosphocholine + a fatty acid + H(+). Functionally, snake venom phospholipase A2 (PLA2) that shows anticoagulant and neurotoxic activities. PLA2 catalyzes the calcium-dependent hydrolysis of the 2-acyl groups in 3-sn-phosphoglycerides. This chain is Acidic phospholipase A2 1, found in Bungarus caeruleus (Indian krait).